Reading from the N-terminus, the 197-residue chain is Thymidine kinase (197 aa).

ATP contacts are provided by residues 15–22 (GPMFAGKT) and 93–96 (DEVQ). The active-site Proton acceptor is Glu94. Zn(2+) is bound by residues Cys150, Cys153, Cys188, and His191.

Belongs to the thymidine kinase family. As to quaternary structure, homotetramer.

The protein resides in the cytoplasm. The catalysed reaction is thymidine + ATP = dTMP + ADP + H(+). The sequence is that of Thymidine kinase from Thermococcus kodakarensis (strain ATCC BAA-918 / JCM 12380 / KOD1) (Pyrococcus kodakaraensis (strain KOD1)).